Reading from the N-terminus, the 317-residue chain is Beta-ketoacyl-[acyl-carrier-protein] synthase III (317 aa).

Catalysis depends on residues Cys112 and His244. The ACP-binding stretch occupies residues Gln245 to Arg249. The active site involves Asn274.

The protein belongs to the thiolase-like superfamily. FabH family. As to quaternary structure, homodimer.

The protein resides in the cytoplasm. The enzyme catalyses malonyl-[ACP] + acetyl-CoA + H(+) = 3-oxobutanoyl-[ACP] + CO2 + CoA. It functions in the pathway lipid metabolism; fatty acid biosynthesis. Its function is as follows. Catalyzes the condensation reaction of fatty acid synthesis by the addition to an acyl acceptor of two carbons from malonyl-ACP. Catalyzes the first condensation reaction which initiates fatty acid synthesis and may therefore play a role in governing the total rate of fatty acid production. Possesses both acetoacetyl-ACP synthase and acetyl transacylase activities. Its substrate specificity determines the biosynthesis of branched-chain and/or straight-chain of fatty acids. This Salmonella paratyphi A (strain ATCC 9150 / SARB42) protein is Beta-ketoacyl-[acyl-carrier-protein] synthase III.